We begin with the raw amino-acid sequence, 583 residues long: Protein cps3 (583 aa).

2 consecutive C3H1-type zinc fingers follow at residues 35-62 and 64-91; these read SLQHVPCKFFRQGTCTSGKNCIFSHDLE and ATEKTICKYFQKGNCKFGSKCALEHVLP. Disordered regions lie at residues 318–346, 471–490, and 504–532; these read LGRPTKSPSVPTSVGSNKSRKFPGINGST, KVSSNLNSGNPTPYNSYNGT, and RQESEKATPPSLNKVSQEPLTATTPKNLG. 3 stretches are compositionally biased toward polar residues: residues 323-334, 475-490, and 513-532; these read KSPSVPTSVGSN, NLNSGNPTPYNSYNGT, and PSLNKVSQEPLTATTPKNLG.

It is found in the cytoplasm. In terms of biological role, responsible for supersensitivity to the spindle poison, isopropyl N-3-chlorophenyl carbamate. Has a role in meiosis. The protein is Protein cps3 (cps3) of Schizosaccharomyces pombe (strain 972 / ATCC 24843) (Fission yeast).